The following is a 292-amino-acid chain: 33 kDa chaperonin (292 aa).

Disulfide bonds link C236–C238 and C269–C272.

Belongs to the HSP33 family. Under oxidizing conditions two disulfide bonds are formed involving the reactive cysteines. Under reducing conditions zinc is bound to the reactive cysteines and the protein is inactive.

It localises to the cytoplasm. Redox regulated molecular chaperone. Protects both thermally unfolding and oxidatively damaged proteins from irreversible aggregation. Plays an important role in the bacterial defense system toward oxidative stress. This is 33 kDa chaperonin from Ruminiclostridium cellulolyticum (strain ATCC 35319 / DSM 5812 / JCM 6584 / H10) (Clostridium cellulolyticum).